Here is a 159-residue protein sequence, read N- to C-terminus: SsrA-binding protein (159 aa).

Positions 134–159 (KEHDKRDTERDRDWSRDKERLMKHNA) are disordered.

This sequence belongs to the SmpB family.

Its subcellular location is the cytoplasm. In terms of biological role, required for rescue of stalled ribosomes mediated by trans-translation. Binds to transfer-messenger RNA (tmRNA), required for stable association of tmRNA with ribosomes. tmRNA and SmpB together mimic tRNA shape, replacing the anticodon stem-loop with SmpB. tmRNA is encoded by the ssrA gene; the 2 termini fold to resemble tRNA(Ala) and it encodes a 'tag peptide', a short internal open reading frame. During trans-translation Ala-aminoacylated tmRNA acts like a tRNA, entering the A-site of stalled ribosomes, displacing the stalled mRNA. The ribosome then switches to translate the ORF on the tmRNA; the nascent peptide is terminated with the 'tag peptide' encoded by the tmRNA and targeted for degradation. The ribosome is freed to recommence translation, which seems to be the essential function of trans-translation. This Marinomonas sp. (strain MWYL1) protein is SsrA-binding protein.